Here is a 208-residue protein sequence, read N- to C-terminus: Large ribosomal subunit protein bL25 (208 aa).

A disordered region spans residues 184–208; sequence VTISGTSSDQDTSGGESSGTTTSED. The segment covering 187 to 208 has biased composition (low complexity); that stretch reads SGTSSDQDTSGGESSGTTTSED.

The protein belongs to the bacterial ribosomal protein bL25 family. CTC subfamily. In terms of assembly, part of the 50S ribosomal subunit; part of the 5S rRNA/L5/L18/L25 subcomplex. Contacts the 5S rRNA. Binds to the 5S rRNA independently of L5 and L18.

Functionally, this is one of the proteins that binds to the 5S RNA in the ribosome where it forms part of the central protuberance. In Ehrlichia ruminantium (strain Gardel), this protein is Large ribosomal subunit protein bL25.